We begin with the raw amino-acid sequence, 95 residues long: MKTLLLTLVVVTIVCLDLGYTIVCHTTATSPISAVTCPPGENLCYRKMWCDAFCSSRGKVVELGCAATCPSKKPYEEVTCCSTDKCNPHPKQRPG.

An N-terminal signal peptide occupies residues 1 to 21 (MKTLLLTLVVVTIVCLDLGYT). Intrachain disulfides connect Cys24–Cys44, Cys37–Cys65, Cys50–Cys54, Cys69–Cys80, and Cys81–Cys86.

This sequence belongs to the three-finger toxin family. Long-chain subfamily. Type II alpha-neurotoxin sub-subfamily. In terms of assembly, monomer in solution, homodimer in crystal state. Expressed by the venom gland.

Its subcellular location is the secreted. Its function is as follows. Binds with high affinity to muscular (tested on Torpedo marmorata, Kd=0.4 nM) and neuronal (tested on chimeric alpha-7/CHRNA7, Kd=0.95 nM) nicotinic acetylcholine receptor (nAChR) and inhibits acetylcholine from binding to the receptor, thereby impairing neuromuscular and neuronal transmission. It also shows an activity on GABA(A) receptors. It antagonises GABA-activated currents with high potency when tested on primary hippocampal neurons. It inhibits recombinantly expressed GABA(A) receptors composed of alpha-2-beta-2-gamma-2 (GABRA2-GABRB2-GABRG2) subunits with high potency (62.3% inhibition at 20 uM of toxin). It also shows a weaker inhibition on GABA(A) receptors composed of alpha-1-beta-2-gamma-2 (GABRA1-GABRB2-GABRG2) subunits, alpha-4-beta-2-gamma-2 (GABRA4-GABRB2-GABRG2) subunits, and alpha-5-beta-2-gamma-2 (GABRA5-GABRB2-GABRG2) subunits. A very weak inhibition is also observed on GABA(A) receptor composed of alpha-1-beta-3-gamma-2 (GABRA1-GABRB3-GABRG2). It has also been shown to bind and inhibit recombinant GABA(A) receptor beta-3/GABRB3 subunit (Kd=about 50 nM). In addition, it blocks the extracellular increase of dopamine evoked by nicotine only at the higher dose (4.2 uM). In vivo, when intraperitoneally injected into mice, induces flaccid paralysis of the limbs and respiratory distress, and causes death in a dose-dependent manner. This is Alpha-bungarotoxin, isoform A31 from Bungarus candidus (Malayan krait).